The primary structure comprises 292 residues: ATP synthase gamma chain (292 aa).

It belongs to the ATPase gamma chain family. F-type ATPases have 2 components, CF(1) - the catalytic core - and CF(0) - the membrane proton channel. CF(1) has five subunits: alpha(3), beta(3), gamma(1), delta(1), epsilon(1). CF(0) has three main subunits: a, b and c.

The protein resides in the cell membrane. Produces ATP from ADP in the presence of a proton gradient across the membrane. The gamma chain is believed to be important in regulating ATPase activity and the flow of protons through the CF(0) complex. This chain is ATP synthase gamma chain, found in Caldicellulosiruptor saccharolyticus (strain ATCC 43494 / DSM 8903 / Tp8T 6331).